Reading from the N-terminus, the 147-residue chain is Hemoglobin subunit epsilon (147 aa).

The region spanning 3–147 is the Globin domain; it reads HFTAEEKAAV…VAIALAHKYH (145 aa). Ser-14 and Ser-51 each carry phosphoserine. The heme b site is built by His-64 and His-93.

It belongs to the globin family. As to quaternary structure, heterotetramer of two alpha chains and two epsilon chains in early embryonic hemoglobin Gower-2; two zeta chains and two epsilon chains in early embryonic hemoglobin Gower-1. Red blood cells.

Functionally, the epsilon chain is a beta-type chain of early mammalian embryonic hemoglobin. This chain is Hemoglobin subunit epsilon (HBE1), found in Pan paniscus (Pygmy chimpanzee).